An 85-amino-acid chain; its full sequence is Small ribosomal subunit protein bS20 (85 aa).

It belongs to the bacterial ribosomal protein bS20 family.

Functionally, binds directly to 16S ribosomal RNA. This is Small ribosomal subunit protein bS20 from Cytophaga hutchinsonii (strain ATCC 33406 / DSM 1761 / CIP 103989 / NBRC 15051 / NCIMB 9469 / D465).